The primary structure comprises 295 residues: Taste receptor type 2 member 120 (295 aa).

Topologically, residues 1–5 are extracellular; sequence MDLTE. A helical transmembrane segment spans residues 6–26; the sequence is WIVTIIMMIEFLLGNCANFFI. The Cytoplasmic portion of the chain corresponds to 27–45; the sequence is MVVNAIDCMKRRKISSADR. Residues 46–66 traverse the membrane as a helical segment; that stretch reads IITALAISRIGLLWAMLMNWH. At 67 to 83 the chain is on the extracellular side; it reads SRVYTTDTYSFQVTAFS. The chain crosses the membrane as a helical span at residues 84–104; sequence GIIWAITNHFTTWLGTILSMF. The Cytoplasmic segment spans residues 105–125; the sequence is YLFKIANFSNCLFLHLKRKLD. A helical transmembrane segment spans residues 126 to 146; the sequence is SVLLVIFLVSSLLVFAYLGVV. Residues 147–177 lie on the Extracellular side of the membrane; that stretch reads NIKKIAWLSVHEGNVTVKSKLMNIASIRDTL. N160 is a glycosylation site (N-linked (GlcNAc...) asparagine). A helical membrane pass occupies residues 178-198; it reads LFSLINIAPFGISLTCVLLLI. Topologically, residues 199 to 230 are cytoplasmic; sequence YSLGKHLKNMKFYGKGCQDQSTMVHIRALQTV. The helical transmembrane segment at 231–251 threads the bilayer; sequence VSFLLLYATYSSCVIISGWSI. Residues 252 to 255 are Extracellular-facing; sequence QNVP. A helical transmembrane segment spans residues 256 to 276; the sequence is IFLFCVTIGAFYPAGHSCILI. Residues 277–295 are Cytoplasmic-facing; that stretch reads WGNQKLKQFLLLFLRQMKC.

This sequence belongs to the G-protein coupled receptor T2R family.

The protein localises to the membrane. Functionally, putative taste receptor which may play a role in the perception of bitterness. The sequence is that of Taste receptor type 2 member 120 from Rattus norvegicus (Rat).